The following is a 227-amino-acid chain: Cytochrome c oxidase subunit 2 (227 aa).

The Mitochondrial intermembrane segment spans residues 1–14; the sequence is MAYPFQLGFQDAAS. A helical transmembrane segment spans residues 15–45; sequence PIMEELLHFHDHTLMIVFLISSLVLYIITLM. The Mitochondrial matrix segment spans residues 46-59; sequence LTTKLTHTSTMDAQ. Residues 60–87 form a helical membrane-spanning segment; it reads EVETVWTILPAIILILIALPSLRILYMM. Residues 88 to 227 are Mitochondrial intermembrane-facing; that stretch reads DEVNNPSLTV…VFEKWSVSML (140 aa). 6 residues coordinate Cu cation: H161, C196, E198, C200, H204, and M207. A Mg(2+)-binding site is contributed by E198.

This sequence belongs to the cytochrome c oxidase subunit 2 family. In terms of assembly, component of the cytochrome c oxidase (complex IV, CIV), a multisubunit enzyme composed of 14 subunits. The complex is composed of a catalytic core of 3 subunits MT-CO1, MT-CO2 and MT-CO3, encoded in the mitochondrial DNA, and 11 supernumerary subunits COX4I, COX5A, COX5B, COX6A, COX6B, COX6C, COX7A, COX7B, COX7C, COX8 and NDUFA4, which are encoded in the nuclear genome. The complex exists as a monomer or a dimer and forms supercomplexes (SCs) in the inner mitochondrial membrane with NADH-ubiquinone oxidoreductase (complex I, CI) and ubiquinol-cytochrome c oxidoreductase (cytochrome b-c1 complex, complex III, CIII), resulting in different assemblies (supercomplex SCI(1)III(2)IV(1) and megacomplex MCI(2)III(2)IV(2)). Found in a complex with TMEM177, COA6, COX18, COX20, SCO1 and SCO2. Interacts with TMEM177 in a COX20-dependent manner. Interacts with COX20. Interacts with COX16. It depends on Cu cation as a cofactor.

It localises to the mitochondrion inner membrane. The catalysed reaction is 4 Fe(II)-[cytochrome c] + O2 + 8 H(+)(in) = 4 Fe(III)-[cytochrome c] + 2 H2O + 4 H(+)(out). In terms of biological role, component of the cytochrome c oxidase, the last enzyme in the mitochondrial electron transport chain which drives oxidative phosphorylation. The respiratory chain contains 3 multisubunit complexes succinate dehydrogenase (complex II, CII), ubiquinol-cytochrome c oxidoreductase (cytochrome b-c1 complex, complex III, CIII) and cytochrome c oxidase (complex IV, CIV), that cooperate to transfer electrons derived from NADH and succinate to molecular oxygen, creating an electrochemical gradient over the inner membrane that drives transmembrane transport and the ATP synthase. Cytochrome c oxidase is the component of the respiratory chain that catalyzes the reduction of oxygen to water. Electrons originating from reduced cytochrome c in the intermembrane space (IMS) are transferred via the dinuclear copper A center (CU(A)) of subunit 2 and heme A of subunit 1 to the active site in subunit 1, a binuclear center (BNC) formed by heme A3 and copper B (CU(B)). The BNC reduces molecular oxygen to 2 water molecules using 4 electrons from cytochrome c in the IMS and 4 protons from the mitochondrial matrix. The sequence is that of Cytochrome c oxidase subunit 2 (MT-CO2) from Balaenoptera physalus (Fin whale).